The primary structure comprises 456 residues: Probable hexose phosphate transport protein (456 aa).

11 helical membrane passes run 34–54, 70–90, 113–133, 161–181, 185–205, 257–277, 302–322, 331–351, 363–383, 394–414, and 421–441; these read IFYSMFLGYVFFYFTRKSFTF, LGIIGSTLYITYGISKFVSGV, IFFGLSSTIPLFVLFWGINGW, VWSTSHNIGGALIPVLTGVAI, GWRGAMFIPGIICIIMGFILI, YVLSNKWLWFLSFASFFIYVV, LCVSLFEIGGLFGMLLAGWLS, GPMNVVFSLGLLVSILGLWGT, FLFIIGFFLFGPQMMIGLAAA, ASGFTGWFAYFGAAFAGYPLG, and GWHGFFVALLACALIALILFL.

This sequence belongs to the major facilitator superfamily. Organophosphate:Pi antiporter (OPA) (TC 2.A.1.4) family.

It localises to the cell membrane. Functionally, transport protein for sugar phosphate uptake. The polypeptide is Probable hexose phosphate transport protein (Chlamydia trachomatis serovar D (strain ATCC VR-885 / DSM 19411 / UW-3/Cx)).